A 343-amino-acid polypeptide reads, in one-letter code: Ribosomal RNA small subunit methyltransferase C (343 aa).

This sequence belongs to the methyltransferase superfamily. RsmC family. Monomer.

The protein localises to the cytoplasm. The enzyme catalyses guanosine(1207) in 16S rRNA + S-adenosyl-L-methionine = N(2)-methylguanosine(1207) in 16S rRNA + S-adenosyl-L-homocysteine + H(+). In terms of biological role, specifically methylates the guanine in position 1207 of 16S rRNA in the 30S particle. This is Ribosomal RNA small subunit methyltransferase C from Escherichia coli (strain ATCC 8739 / DSM 1576 / NBRC 3972 / NCIMB 8545 / WDCM 00012 / Crooks).